A 484-amino-acid chain; its full sequence is Ureidoglycolate hydrolase (484 aa).

The first 28 residues, M1 to G28, serve as a signal peptide directing secretion. 4 residues coordinate Mn(2+): H148, D159, E194, and H262. Substrate stretches follow at residues E193–E194 and H262–Q265. The interval A284–D399 is involved in dimerization. Substrate is bound by residues H298, N348, and R361. Residues Y431–H432 form a substrate region. Position 456 (H456) interacts with Mn(2+). Residue H456 coordinates substrate.

The protein belongs to the peptidase M20 family. In terms of assembly, homodimer. It depends on Mn(2+) as a cofactor. Ni(2+) is required as a cofactor. Co(2+) serves as cofactor.

It is found in the endoplasmic reticulum. It carries out the reaction (S)-ureidoglycolate + H2O + 2 H(+) = glyoxylate + 2 NH4(+) + CO2. The protein operates within nitrogen metabolism; (S)-allantoin degradation; glyoxylate from (S)-ureidoglycolate: step 1/1. Functionally, involved in the catabolism of purine nucleotides. The sequential activity of AAH, UGLYAH and UAH allows a complete purine breakdown without the intermediate generation of urea. The polypeptide is Ureidoglycolate hydrolase (Oryza sativa subsp. japonica (Rice)).